The following is a 239-amino-acid chain: UDP-2,3-diacylglucosamine hydrolase (239 aa).

Mn(2+) is bound by residues D8, H10, D41, N78, and H113. Residue 78 to 79 (NR) coordinates substrate. The substrate site is built by D121, S159, N163, K166, and H194. Mn(2+) is bound by residues H194 and H196.

Belongs to the LpxH family. Requires Mn(2+) as cofactor.

Its subcellular location is the cell inner membrane. It catalyses the reaction UDP-2-N,3-O-bis[(3R)-3-hydroxytetradecanoyl]-alpha-D-glucosamine + H2O = 2-N,3-O-bis[(3R)-3-hydroxytetradecanoyl]-alpha-D-glucosaminyl 1-phosphate + UMP + 2 H(+). It functions in the pathway glycolipid biosynthesis; lipid IV(A) biosynthesis; lipid IV(A) from (3R)-3-hydroxytetradecanoyl-[acyl-carrier-protein] and UDP-N-acetyl-alpha-D-glucosamine: step 4/6. In terms of biological role, hydrolyzes the pyrophosphate bond of UDP-2,3-diacylglucosamine to yield 2,3-diacylglucosamine 1-phosphate (lipid X) and UMP by catalyzing the attack of water at the alpha-P atom. Involved in the biosynthesis of lipid A, a phosphorylated glycolipid that anchors the lipopolysaccharide to the outer membrane of the cell. This chain is UDP-2,3-diacylglucosamine hydrolase, found in Shewanella sp. (strain MR-7).